Reading from the N-terminus, the 167-residue chain is 3-dehydroquinate dehydratase (167 aa).

Tyr22 acts as the Proton acceptor in catalysis. Residues Asn76, His82, and Asp89 each contribute to the substrate site. The Proton donor role is filled by His102. Substrate contacts are provided by residues 103-104 (LT) and Arg113.

It belongs to the type-II 3-dehydroquinase family. Homododecamer.

The enzyme catalyses 3-dehydroquinate = 3-dehydroshikimate + H2O. It functions in the pathway metabolic intermediate biosynthesis; chorismate biosynthesis; chorismate from D-erythrose 4-phosphate and phosphoenolpyruvate: step 3/7. Its function is as follows. Catalyzes a trans-dehydration via an enolate intermediate. In Helicobacter pylori (strain P12), this protein is 3-dehydroquinate dehydratase.